The chain runs to 226 residues: Ribose-5-phosphate isomerase A (226 aa).

Residues 29–32 (TGST), 84–87 (DGAD), and 97–100 (KGGG) contribute to the substrate site. The Proton acceptor role is filled by Glu-106. Lys-124 contributes to the substrate binding site.

Belongs to the ribose 5-phosphate isomerase family. As to quaternary structure, homodimer.

The catalysed reaction is aldehydo-D-ribose 5-phosphate = D-ribulose 5-phosphate. It functions in the pathway carbohydrate degradation; pentose phosphate pathway; D-ribose 5-phosphate from D-ribulose 5-phosphate (non-oxidative stage): step 1/1. Functionally, catalyzes the reversible conversion of ribose-5-phosphate to ribulose 5-phosphate. This chain is Ribose-5-phosphate isomerase A, found in Methanothermobacter thermautotrophicus (strain ATCC 29096 / DSM 1053 / JCM 10044 / NBRC 100330 / Delta H) (Methanobacterium thermoautotrophicum).